Here is a 176-residue protein sequence, read N- to C-terminus: Conidiation-specific protein 8 (176 aa).

Disordered stretches follow at residues 1–66 and 79–162; these read MDDT…SKLI and AASE…PQGF. A compositionally biased stretch (low complexity) spans 79–99; that stretch reads AASEAFRSERSASTSSTTSET.

The polypeptide is Conidiation-specific protein 8 (con-8) (Neurospora crassa (strain ATCC 24698 / 74-OR23-1A / CBS 708.71 / DSM 1257 / FGSC 987)).